Consider the following 454-residue polypeptide: Histidine--tRNA ligase (454 aa).

Residues 434-454 (ADAGAWNPPTEDLHPGVIGTW) are disordered.

Belongs to the class-II aminoacyl-tRNA synthetase family. Homodimer.

Its subcellular location is the cytoplasm. It catalyses the reaction tRNA(His) + L-histidine + ATP = L-histidyl-tRNA(His) + AMP + diphosphate + H(+). The chain is Histidine--tRNA ligase (hisS) from Cutibacterium acnes (strain DSM 16379 / KPA171202) (Propionibacterium acnes).